Here is a 910-residue protein sequence, read N- to C-terminus: Staphylococcal nuclease domain-containing protein 1 (910 aa).

At alanine 2 the chain carries N-acetylalanine. 3 TNase-like domains span residues 18 to 166 (TVQR…MWSE), 193 to 328 (KPVN…IWRD), and 341 to 496 (KQFV…LHSK). A Phosphothreonine modification is found at threonine 103. Lysine 193 is subject to N6-acetyllysine. Threonine 240 is subject to Phosphothreonine. 2 short sequence motifs (nuclear localization signal) span residues 321–325 (RRLRI) and 388–392 (KKLRP). At serine 426 the chain carries Phosphoserine. Lysine 513 participates in a covalent cross-link: Glycyl lysine isopeptide (Lys-Gly) (interchain with G-Cter in SUMO2). The TNase-like 4 domain maps to 525-660 (GRSEAVVEYV…KQKKEKVWAH (136 aa)). Lysine 641 bears the N6-acetyllysine mark. Serine 645 is subject to Phosphoserine. One can recognise a Tudor domain in the interval 729 to 787 (APRRGEFCIAKFVDGEWYRARVEKVESPAKVHVFYIDYGNREILPSTRLGTLPPAFSTR). Position 779 is a phosphothreonine (threonine 779). A phosphoserine mark is found at serine 785 and serine 909.

In terms of assembly, forms a ternary complex with STAT6 and POLR2A. Associates with the RNA-induced silencing complex (RISC). Interacts with the RISC components AGO2, FMR1 and TNRC6A. Interacts with GTF2E1 and GTF2E2. Interacts with PIM1. Interacts with STAT5. Interacts with SYT11 (via C2 2 domain); the interaction with SYT11 is direct. In terms of processing, phosphorylated by PIM1 in vitro. As to expression, in lactating cows highly expressed in mammary epithelial cells.

It localises to the cytoplasm. It is found in the nucleus. The protein resides in the melanosome. It catalyses the reaction Endonucleolytic cleavage to nucleoside 3'-phosphates and 3'-phosphooligonucleotide end-products.. Its function is as follows. Endonuclease that mediates miRNA decay of both protein-free and AGO2-loaded miRNAs. As part of its function in miRNA decay, regulates mRNAs involved in G1-to-S phase transition. Functions as a bridging factor between STAT6 and the basal transcription factor. Plays a role in PIM1 regulation of MYB activity. Functions as a transcriptional coactivator for STAT5. The sequence is that of Staphylococcal nuclease domain-containing protein 1 (SND1) from Bos taurus (Bovine).